The sequence spans 338 residues: UDP-glucose 4-epimerase (338 aa).

NAD(+) is bound by residues 11-12 (YI), 31-36 (DNLCNS), 58-59 (DI), 80-84 (FAGLK), asparagine 99, serine 124, tyrosine 149, lysine 153, and phenylalanine 178. 2 residues coordinate substrate: serine 124 and tyrosine 149. Tyrosine 149 serves as the catalytic Proton acceptor. Substrate is bound by residues asparagine 179, 199 to 200 (NL), 216 to 218 (AIF), arginine 231, 292 to 295 (REGD), and tyrosine 299.

The protein belongs to the NAD(P)-dependent epimerase/dehydratase family. As to quaternary structure, homodimer. NAD(+) is required as a cofactor.

It catalyses the reaction UDP-alpha-D-glucose = UDP-alpha-D-galactose. The protein operates within carbohydrate metabolism; galactose metabolism. With respect to regulation, inhibited by UDP-phenol and NaBH3CN. Involved in the metabolism of galactose. Catalyzes the conversion of UDP-galactose (UDP-Gal) to UDP-glucose (UDP-Glc) through a mechanism involving the transient reduction of NAD. It is only active on UDP-galactose and UDP-glucose. The sequence is that of UDP-glucose 4-epimerase (galE) from Escherichia coli (strain K12).